Reading from the N-terminus, the 849-residue chain is Membrane protein-large ribosomal subunit bL9 fusion protein (849 aa).

Positions 1–680 (MFSKNKHNTK…TQLEGTNIKT (680 aa)) are unknown. Helical transmembrane passes span 11 to 31 (FIVIACVIVVLILILFCLDFQ) and 64 to 84 (IIFFIFNFFGKIILASFVISF). The region spanning 214–342 (KTLALAMITF…GGDQVVVNIE (129 aa)) is the GGDEF domain. Residues 681-849 (VTDTLKHFLK…FLNVTERKSK (169 aa)) are large ribosomal subunit protein bL9.

It belongs to the bacterial ribosomal protein bL9 family.

The protein localises to the cell membrane. Its function is as follows. Binds to the 23S rRNA. This chain is Membrane protein-large ribosomal subunit bL9 fusion protein, found in Onion yellows phytoplasma (strain OY-M).